The chain runs to 1025 residues: Multidrug resistance protein MdtC (1025 aa).

12 helical membrane passes run 3 to 23 (FFALFIYRPVATILLSVAITL), 333 to 353 (EVEQTLIISVALVILVVFLFL), 360 to 380 (IIPAVAVPVSLIGTFAAMYLC), 387 to 407 (LSLMALTIATGFVVDDAIVVL), 431 to 451 (VGFTVLSMSLSLVAVFLPLLL), 463 to 483 (FAVTLSVAIGISLLVSLTLTP), 528 to 548 (LVGVVLLGTIALNIWLYISIP), 853 to 873 (VILIIAAIATVYIVLGILYES), 875 to 895 (VHPLTILSTLPSAGVGALLAL), 897 to 917 (LFNAPFSLIALIGIMLLIGIV), 953 to 973 (PIMMTTLAALFGALPLVLSGG), and 984 to 1004 (ITIVGGLVMSQLLTLYTTPVV).

It belongs to the resistance-nodulation-cell division (RND) (TC 2.A.6) family. MdtC subfamily. Part of a tripartite efflux system composed of MdtA, MdtB and MdtC. MdtC forms a heteromultimer with MdtB.

It localises to the cell inner membrane. Its function is as follows. The MdtABC tripartite complex confers resistance against novobiocin and deoxycholate. The polypeptide is Multidrug resistance protein MdtC (Escherichia coli (strain SMS-3-5 / SECEC)).